We begin with the raw amino-acid sequence, 359 residues long: GTP cyclohydrolase FolE2 (359 aa).

This sequence belongs to the GTP cyclohydrolase IV family.

The enzyme catalyses GTP + H2O = 7,8-dihydroneopterin 3'-triphosphate + formate + H(+). It participates in cofactor biosynthesis; 7,8-dihydroneopterin triphosphate biosynthesis; 7,8-dihydroneopterin triphosphate from GTP: step 1/1. In terms of biological role, converts GTP to 7,8-dihydroneopterin triphosphate. The polypeptide is GTP cyclohydrolase FolE2 (Cereibacter sphaeroides (strain ATCC 17025 / ATH 2.4.3) (Rhodobacter sphaeroides)).